Consider the following 339-residue polypeptide: Fructose-1,6-bisphosphatase, cytosolic (339 aa).

The Mg(2+) site is built by Glu70, Glu99, Asp120, Leu122, and Asp123. Residues 123–126, Asn214, Tyr246, Tyr266, and Lys276 each bind substrate; that span reads DGSS. Glu282 contacts Mg(2+).

The protein belongs to the FBPase class 1 family. Requires Mg(2+) as cofactor.

Its subcellular location is the cytoplasm. It catalyses the reaction beta-D-fructose 1,6-bisphosphate + H2O = beta-D-fructose 6-phosphate + phosphate. The sequence is that of Fructose-1,6-bisphosphatase, cytosolic from Brassica napus (Rape).